Reading from the N-terminus, the 284-residue chain is Homeobox protein SMOX-5 (284 aa).

Positions 37 to 96 (RRKTRTTFSNCQLNELENNFNRQRYLTPTDRDRIAKHLGLTNTQVITWFQNRRAKLKREA) form a DNA-binding region, homeobox. Residues 117-172 (LSLSDHDHEETQIDDENEQGDNNNDDDGDDNDVEEDDGEEQEKNHTKYLTQPPSIS) form a disordered region. Residues 128–156 (QIDDENEQGDNNNDDDGDDNDVEEDDGEE) are compositionally biased toward acidic residues.

It localises to the nucleus. This Schistosoma mansoni (Blood fluke) protein is Homeobox protein SMOX-5 (SMOX-5).